We begin with the raw amino-acid sequence, 1703 residues long: Arf-GAP with Rho-GAP domain, ANK repeat and PH domain-containing protein 2 (1703 aa).

Residues 6-70 (EVNADIRDFL…LKQLQMIFSK (65 aa)) form the SAM domain. Residue tyrosine 77 is modified to Phosphotyrosine. 3 disordered regions span residues 84 to 132 (KNGS…LSEG), 191 to 232 (EEHT…NGTN), and 286 to 319 (PVPE…LTLK). 3 stretches are compositionally biased toward polar residues: residues 85–103 (NGST…STHT), 123–132 (MVTTSTLSEG), and 197–214 (GNLT…NTEC). Residues 222–232 (TSGTHSGNGTN) are compositionally biased toward low complexity. Polar residues predominate over residues 308–319 (NTTSAGKSLTLK). PH domains are found at residues 480 to 572 (AKEK…SALK) and 585 to 677 (APEK…QSIA). Residues 674-809 (QSIAETLSDY…TLLASLTKEE (136 aa)) form the Arf-GAP domain. The C4-type zinc-finger motif lies at 698–721 (CADCKAPDPDWASINLCVVICKKC). PH domains are found at residues 899–1001 (QTAA…KRFV) and 1012–1110 (DYDL…KAAG). Positions 1114–1295 (NALQDQQLCK…DLINNYVEIF (182 aa)) constitute a Rho-GAP domain. The Ras-associating domain maps to 1324–1418 (GDLLIEVFVE…AYLVVKRFLT (95 aa)). Residues 1428–1531 (KSIKEGILKL…WMASIFIAQH (104 aa)) form the PH 5 domain. Serine 1627 carries the phosphoserine modification. 2 disordered regions span residues 1633 to 1670 (DTEA…DPKL) and 1684 to 1703 (RSRP…KEVK). 2 stretches are compositionally biased toward basic and acidic residues: residues 1653 to 1670 (KKTE…DPKL) and 1688 to 1703 (LHKE…KEVK).

It localises to the cytoplasm. Functionally, phosphatidylinositol 3,4,5-trisphosphate-dependent GTPase-activating protein that modulates actin cytoskeleton remodeling by regulating ARF and RHO family members. Is activated by phosphatidylinositol 3,4,5-trisphosphate (PtdIns(3,4,5)P3) binding. Can be activated by phosphatidylinositol 3,4-bisphosphate (PtdIns(3,4,5)P2) binding, albeit with lower efficiency. This is Arf-GAP with Rho-GAP domain, ANK repeat and PH domain-containing protein 2 (Arap2) from Mus musculus (Mouse).